Reading from the N-terminus, the 562-residue chain is Arginine--tRNA ligase (562 aa).

Residues P121–H131 carry the 'HIGH' region motif.

Belongs to the class-I aminoacyl-tRNA synthetase family. As to quaternary structure, monomer.

Its subcellular location is the cytoplasm. It carries out the reaction tRNA(Arg) + L-arginine + ATP = L-arginyl-tRNA(Arg) + AMP + diphosphate. In Lactiplantibacillus plantarum (strain ATCC BAA-793 / NCIMB 8826 / WCFS1) (Lactobacillus plantarum), this protein is Arginine--tRNA ligase.